The chain runs to 308 residues: MSDTLLTLRDVHINFPARKNWLGKTTEHVHAINGIDLQIRRGETLGIVGESGCGKSTLAQLLMGMLQPSHGQYIRSGSQRIMQMVFQDPLSSLNPRLPVWRIITEPLWIAKRSSEQQRRALAEELAVQVGIRPEYLDRLPHAFSGGQRQRIAIARALSSQPDVIVLDEPTSALDISVQAQILNLLVTLQENHGLTYVLISHNVSVIRHMSDRVAVMYLGQIVELGDAQQVLTAPAHPYTRLLLDSLPAIDKPLEEEWALRKTDLPGNRTLPQGCFFYERCPLATHGCEVRQSLAIREDGRELRCWRAL.

The region spanning 8–243 is the ABC transporter domain; the sequence is LRDVHINFPA…PAHPYTRLLL (236 aa). An ATP-binding site is contributed by 49–56; that stretch reads GESGCGKS.

It belongs to the ABC transporter superfamily. The complex is composed of two ATP-binding proteins (DdpD and DdpF), two transmembrane proteins (DdpB and DdpC) and a solute-binding protein (DdpA).

The protein localises to the cell inner membrane. In terms of biological role, part of the ABC transporter complex DdpABCDF, which is probably involved in D,D-dipeptide transport. Probably responsible for energy coupling to the transport system. The chain is Probable D,D-dipeptide transport ATP-binding protein DdpF from Escherichia coli (strain K12).